A 564-amino-acid chain; its full sequence is Bicarbonate transporter BicA (564 aa).

The Cytoplasmic segment spans residues 1 to 11 (MQITNKIHFRN). Residues 12-37 (LQGDLFGGVTAAVIALPMALAFGIAS) form a helical membrane-spanning segment. Residues 38–40 (GAG) are Periplasmic-facing. Residues 41–58 (ATAGLWGAVIVGFFAALF) traverse the membrane as a helical segment. The Cytoplasmic segment spans residues 59–70 (GGTPTLISEPTG). T69 serves as a coordination point for hydrogencarbonate. A helical transmembrane segment spans residues 71–86 (PMTVVQTAVIASLVAA). Residues 87 to 90 (DPDN) are Periplasmic-facing. Residues 91 to 112 (GLAMAFTVVMMAGLFQIAFGLL) form a helical membrane-spanning segment. Topologically, residues 113-122 (KLGKYVTMMP) are cytoplasmic. Residues 123–145 (YTVISGFMSGIGIILVILQLAPF) form a helical membrane-spanning segment. Topologically, residues 146 to 170 (LGQASPKGGVIGTLQALPNLVSNVR) are periplasmic. Residues 171–185 (PVETLLALMTVGIIW) form a helical membrane-spanning segment. Over 186–196 (FMPSRWKKFAP) the chain is Cytoplasmic. The helical transmembrane segment at 197 to 211 (PQLVALVLGTIISIT) threads the bilayer. The Periplasmic portion of the chain corresponds to 212-240 (LFGDLDIRRIGEIQAGLPALQLPVFQADQ). A helical membrane pass occupies residues 241 to 269 (LQRMLIDAAVLGMLGCIDALLTSVVADSL). Positions 258 and 262 each coordinate Na(+). At 270–275 (TRTEHN) the chain is on the cytoplasmic side. A helical transmembrane segment spans residues 276-292 (SNKELVGQGIGNVMSGL). The Periplasmic portion of the chain corresponds to 293 to 302 (FGGLGGAGAT). Residue G300 participates in Na(+) binding. A301 contacts hydrogencarbonate. A Na(+)-binding site is contributed by T302. Residues 303–312 (MGTVVNIQSG) traverse the membrane as a helical segment. The Cytoplasmic segment spans residues 313-315 (GRT). Residues 316 to 338 (ALSGLIRAMVLLVVILGAAKLAA) traverse the membrane as a helical segment. Residues 339 to 341 (TIP) lie on the Periplasmic side of the membrane. The helical transmembrane segment at 342–357 (LAVLAGIAFKVGVDII) threads the bilayer. Over 358 to 369 (DWGFLKRAHHVS) the chain is Cytoplasmic. A helical membrane pass occupies residues 370-390 (IKGALIMYAVIVLTVLVDLIA). Over 391–392 (AV) the chain is Periplasmic. Residues 393 to 405 (GIGVFIANILTID) form a helical membrane-spanning segment. At 406-564 (RMSALQSKAV…PSSSSVQTTY (159 aa)) the chain is on the cytoplasmic side. Residues 432-542 (KRWLDEGNGR…DDRSEALKDA (111 aa)) form the STAS domain.

This sequence belongs to the SLC26A/SulP transporter (TC 2.A.53) family. As to quaternary structure, forms homodimers through the STAS cytoplasmic domain.

It localises to the cell inner membrane. In terms of biological role, low affinity, high-flux Na(+)-dependent bicarbonate transporter. Involved in carbone dioxide-concentrating mechanisms (CCMs) that accumulate CO(2) and improve photosynthetic carbon fixation. The chain is Bicarbonate transporter BicA from Synechocystis sp. (strain ATCC 27184 / PCC 6803 / Kazusa).